The following is a 146-amino-acid chain: Antiholin-like protein LrgA (146 aa).

Transmembrane regions (helical) follow at residues 7–29, 34–53, 65–87, and 97–119; these read YGFL…IAAI, IPAS…LKVI, LTSL…LGVM, and VILL…ILSL.

It belongs to the CidA/LrgA family. LrgA subfamily.

Its subcellular location is the cell membrane. Inhibits the expression or activity of extracellular murein hydrolases by interacting, possibly with LrgB, with the holin-like protein CidA. The LrgAB and CidA proteins may affect the proton motive force of the membrane. May be involved in programmed cell death (PCD), possibly triggering PCD in response to antibiotics and environmental stresses. This Bacillus subtilis (strain 168) protein is Antiholin-like protein LrgA.